A 149-amino-acid chain; its full sequence is Sec-independent protein translocase protein TatB (149 aa).

The helical transmembrane segment at 1–21 (MFDIGFTELIVIGIVALVVVG) threads the bilayer. The segment at 92–149 (VDMLDKSVRNEPQNAQTPPQTADAEPAQPDVRQQTLPLEEPDQNRAAGEPSSTSTRPA) is disordered. Residues 101–111 (NEPQNAQTPPQ) show a composition bias toward polar residues.

The protein belongs to the TatB family. In terms of assembly, the Tat system comprises two distinct complexes: a TatABC complex, containing multiple copies of TatA, TatB and TatC subunits, and a separate TatA complex, containing only TatA subunits. Substrates initially bind to the TatABC complex, which probably triggers association of the separate TatA complex to form the active translocon.

It is found in the cell inner membrane. Its function is as follows. Part of the twin-arginine translocation (Tat) system that transports large folded proteins containing a characteristic twin-arginine motif in their signal peptide across membranes. Together with TatC, TatB is part of a receptor directly interacting with Tat signal peptides. TatB may form an oligomeric binding site that transiently accommodates folded Tat precursor proteins before their translocation. The sequence is that of Sec-independent protein translocase protein TatB from Thiobacillus denitrificans (strain ATCC 25259 / T1).